Consider the following 154-residue polypeptide: Ribonuclease K6 (154 aa).

Positions 1–27 (MGPHLLGRSSLLLLLLGMWWSVRPLCA) are cleaved as a signal peptide. Catalysis depends on histidine 42, which acts as the Proton acceptor. Disulfide bonds link cysteine 50–cysteine 108, cysteine 64–cysteine 118, cysteine 82–cysteine 133, and cysteine 89–cysteine 96. Asparagine 59 carries an N-linked (GlcNAc...) asparagine glycan. Residues 65-69 (KPENT) and lysine 90 each bind substrate. N-linked (GlcNAc...) asparagine glycosylation occurs at asparagine 104. The active-site Proton donor is histidine 149.

It belongs to the pancreatic ribonuclease family. As to quaternary structure, interacts (via N-terminus) with bacterial lipopolysaccharide (LPS). As to expression, kidney (at protein level).

The protein localises to the secreted. It is found in the lysosome. Its subcellular location is the cytoplasmic granule. Functionally, ribonuclease which shows a preference for the pyrimidines uridine and cytosine. Has potent antimicrobial activity against a range of Gram-positive and Gram-negative bacteria, including P.aeruginosa, A.baumanii, M.luteus, S.aureus, E.faecalis, E.faecium, S.saprophyticus and E.coli. Causes loss of bacterial membrane integrity, and also promotes agglutination of Gram-negative bacteria. Probably contributes to urinary tract sterility. Bactericidal activity is independent of RNase activity. This Bos taurus (Bovine) protein is Ribonuclease K6 (RNASE6).